A 263-amino-acid chain; its full sequence is HTH-type transcriptional repressor NanR (263 aa).

The tract at residues methionine 1–leucine 22 is disordered. The HTH gntR-type domain occupies lysine 30–proline 98. The H-T-H motif DNA-binding region spans glutamate 58–alanine 77.

The protein belongs to the NanR family.

Functionally, transcriptional repressor that controls expression of the genes required for the catabolism of sialic acids. The chain is HTH-type transcriptional repressor NanR from Shigella sonnei (strain Ss046).